Reading from the N-terminus, the 737-residue chain is NAD(P)H-quinone oxidoreductase subunit 5, chloroplastic (737 aa).

16 helical membrane-spanning segments follow: residues 9–29, 40–60, 89–109, 125–145, 147–167, 185–205, 219–239, 258–278, 286–306, 327–347, 354–374, 396–416, 425–445, 543–563, 602–622, and 717–737; these read WIIP…LILF, WAFQ…YLSI, IDPL…MVLI, FAYM…SNLI, IYIF…FWFT, GDFG…SFEF, NELN…GAVA, TPIS…FLVA, VIPY…LLGA, LGYM…FHLI, ALLF…VGYS, ITFL…CFWS, WLYS…TAFY, LFPI…GIPF, VVSV…YKPI, and SYLF…YLLF.

It belongs to the complex I subunit 5 family. NDH is composed of at least 16 different subunits, 5 of which are encoded in the nucleus.

The protein resides in the plastid. The protein localises to the chloroplast thylakoid membrane. The catalysed reaction is a plastoquinone + NADH + (n+1) H(+)(in) = a plastoquinol + NAD(+) + n H(+)(out). It carries out the reaction a plastoquinone + NADPH + (n+1) H(+)(in) = a plastoquinol + NADP(+) + n H(+)(out). NDH shuttles electrons from NAD(P)H:plastoquinone, via FMN and iron-sulfur (Fe-S) centers, to quinones in the photosynthetic chain and possibly in a chloroplast respiratory chain. The immediate electron acceptor for the enzyme in this species is believed to be plastoquinone. Couples the redox reaction to proton translocation, and thus conserves the redox energy in a proton gradient. This Solanum lycopersicum (Tomato) protein is NAD(P)H-quinone oxidoreductase subunit 5, chloroplastic (ndhF).